Consider the following 571-residue polypeptide: uncharacterized protein (571 aa).

Transmembrane regions (helical) follow at residues 10–29, 36–55, 65–87, 96–118, and 166–188; these read VRLH…HFIG, VSLG…GLLF, WAFF…FASL, ALAV…LFRF, and ATTY…PRLL. The region spanning 294 to 378 is the RCK C-terminal domain; sequence TEVDDQELLS…IATAARNLGF (85 aa). 6 helical membrane-spanning segments follow: residues 388 to 406, 411 to 433, 446 to 465, 480 to 502, 509 to 531, and 546 to 568; these read LVYL…LLQV, VPLG…WLYS, LRLL…GLAA, LFAK…GLLL, LPPI…LNAL, and VPFA…CAVA.

Belongs to the AAE transporter (TC 2.A.81) family.

It is found in the cell membrane. This is an uncharacterized protein from Bordetella bronchiseptica (strain ATCC BAA-588 / NCTC 13252 / RB50) (Alcaligenes bronchisepticus).